A 341-amino-acid polypeptide reads, in one-letter code: Ketol-acid reductoisomerase (NADP(+)) (341 aa).

Residues 2-181 (AKVYYNGDVN…GAARAGVLET (180 aa)) enclose the KARI N-terminal Rossmann domain. Residues 25–28 (YGSQ), R48, S52, and 82–85 (DEHQ) contribute to the NADP(+) site. H107 is an active-site residue. G133 provides a ligand contact to NADP(+). In terms of domain architecture, KARI C-terminal knotted spans 182–327 (TFKEETETDL…RELREMMPFV (146 aa)). 4 residues coordinate Mg(2+): D190, E194, E226, and E230. A substrate-binding site is contributed by S251.

This sequence belongs to the ketol-acid reductoisomerase family. It depends on Mg(2+) as a cofactor.

It catalyses the reaction (2R)-2,3-dihydroxy-3-methylbutanoate + NADP(+) = (2S)-2-acetolactate + NADPH + H(+). The enzyme catalyses (2R,3R)-2,3-dihydroxy-3-methylpentanoate + NADP(+) = (S)-2-ethyl-2-hydroxy-3-oxobutanoate + NADPH + H(+). The protein operates within amino-acid biosynthesis; L-isoleucine biosynthesis; L-isoleucine from 2-oxobutanoate: step 2/4. It participates in amino-acid biosynthesis; L-valine biosynthesis; L-valine from pyruvate: step 2/4. Involved in the biosynthesis of branched-chain amino acids (BCAA). Catalyzes an alkyl-migration followed by a ketol-acid reduction of (S)-2-acetolactate (S2AL) to yield (R)-2,3-dihydroxy-isovalerate. In the isomerase reaction, S2AL is rearranged via a Mg-dependent methyl migration to produce 3-hydroxy-3-methyl-2-ketobutyrate (HMKB). In the reductase reaction, this 2-ketoacid undergoes a metal-dependent reduction by NADPH to yield (R)-2,3-dihydroxy-isovalerate. The sequence is that of Ketol-acid reductoisomerase (NADP(+)) from Shouchella clausii (strain KSM-K16) (Alkalihalobacillus clausii).